The sequence spans 490 residues: MARFELQKLYIDGGYVDASNTETFDAINPANGEVLAQIQRAGKEDVERAVVAAEKGQKIWAAMTAVERSRILRRAVDILRERNDELAALETLDTGKAISETRYVDIVTGADVLEYYAGLVPAIEGEQIPLRDSSFVYTRREPLGVVAGIGAWNYPIQIALWKSAPALAAGNAMIFKPSEVTSLTTLKLAEIYTEAGVPNGVFNVLTGSGREVGTWITEHPRIEKVSFTGGTDTGKKVMASASSSSLKEVTMELGGKSPLIVFDDADLDRAADIAMMANFYSSGQVCTNGTRVFVPNALKAEFEAKILERVKRIRAGNPEDENINFGPLVSFEHMESVLGYIAKGKEQGARLLCGGDRLTGGVFDKGAFVAPTVFTDCTDEMTIVREEIFGPVMSILGYDTEEEVVRRANDTDFGLAAGIVTRDLNRAHRVIHLLEAGICWINAWGESAAQMPVGGYKQSGVGRENGISSLAQYTRIKSVQIELGDYASVF.

2 residues coordinate K(+): I27 and D93. 150–152 (GAW) lines the NAD(+) pocket. Catalysis depends on K162, which acts as the Charge relay system. 176 to 179 (KPSE) is an NAD(+) binding site. Position 180 (V180) interacts with K(+). 230–233 (GTDT) contributes to the NAD(+) binding site. L246 is a binding site for K(+). E252 functions as the Proton acceptor in the catalytic mechanism. Residues G254, C286, and E387 each contribute to the NAD(+) site. Residue C286 is the Nucleophile of the active site. Position 286 is a cysteine sulfenic acid (-SOH) (C286). K457 and G460 together coordinate K(+). E464 functions as the Charge relay system in the catalytic mechanism.

Belongs to the aldehyde dehydrogenase family. Dimer of dimers. The cofactor is K(+).

It carries out the reaction betaine aldehyde + NAD(+) + H2O = glycine betaine + NADH + 2 H(+). Its pathway is amine and polyamine biosynthesis; betaine biosynthesis via choline pathway; betaine from betaine aldehyde: step 1/1. In terms of biological role, involved in the biosynthesis of the osmoprotectant glycine betaine. Catalyzes the irreversible oxidation of betaine aldehyde to the corresponding acid. The sequence is that of Betaine aldehyde dehydrogenase from Pseudomonas savastanoi pv. phaseolicola (strain 1448A / Race 6) (Pseudomonas syringae pv. phaseolicola (strain 1448A / Race 6)).